The sequence spans 110 residues: Thiosulfate sulfurtransferase GlpE (110 aa).

The Rhodanese domain occupies 17 to 105 (KQEGAVVVDI…WRATYPAETA (89 aa)). The Cysteine persulfide intermediate role is filled by cysteine 65.

It belongs to the GlpE family.

It is found in the cytoplasm. The catalysed reaction is thiosulfate + hydrogen cyanide = thiocyanate + sulfite + 2 H(+). It carries out the reaction thiosulfate + [thioredoxin]-dithiol = [thioredoxin]-disulfide + hydrogen sulfide + sulfite + 2 H(+). Functionally, transferase that catalyzes the transfer of sulfur from thiosulfate to thiophilic acceptors such as cyanide or dithiols. May function in a CysM-independent thiosulfate assimilation pathway by catalyzing the conversion of thiosulfate to sulfite, which can then be used for L-cysteine biosynthesis. The chain is Thiosulfate sulfurtransferase GlpE from Pseudomonas putida (strain GB-1).